The following is a 409-amino-acid chain: Arginine deiminase (409 aa).

Cys-399 functions as the Amidino-cysteine intermediate in the catalytic mechanism.

Belongs to the arginine deiminase family.

It localises to the cytoplasm. It carries out the reaction L-arginine + H2O = L-citrulline + NH4(+). It participates in amino-acid degradation; L-arginine degradation via ADI pathway; carbamoyl phosphate from L-arginine: step 1/2. This is Arginine deiminase from Streptococcus pneumoniae (strain JJA).